A 191-amino-acid chain; its full sequence is Thiol:disulfide interchange protein TxlA (191 aa).

Residues 14–30 traverse the membrane as a helical segment; that stretch reads ILVIAAALVLTILVVLG. The Thioredoxin domain occupies 27-148; it reads VVLGSRQPSA…LAANLDALVE (122 aa). A disulfide bridge connects residues Cys-69 and Cys-72. The segment covering 165–185 has biased composition (polar residues); the sequence is SADLQPSRSSQTDPRSHSGQV. A disordered region spans residues 165-191; the sequence is SADLQPSRSSQTDPRSHSGQVQDGVLD.

It belongs to the thioredoxin family.

It is found in the cell membrane. Its function is as follows. Required for disulfide bond formation in some proteins. Acts by transferring its disulfide bond to other proteins and is reduced in the process. This is Thiol:disulfide interchange protein TxlA (txlA) from Synechococcus elongatus (strain ATCC 33912 / PCC 7942 / FACHB-805) (Anacystis nidulans R2).